The sequence spans 160 residues: Protein MGF 300-2R (160 aa).

It belongs to the asfivirus MGF 300 family.

Its function is as follows. Plays a role in virus cell tropism, and may be required for efficient virus replication in macrophages. In Ornithodoros (relapsing fever ticks), this protein is Protein MGF 300-2R.